A 344-amino-acid polypeptide reads, in one-letter code: uncharacterized protein (344 aa).

The stretch at 221–249 forms a coiled coil; the sequence is IQAQSMDEQKQIQEIYQNVEKLKEDVTKN.

Belongs to the IIV-6 287R family.

This is an uncharacterized protein from Aedes vexans (Inland floodwater mosquito).